The sequence spans 92 residues: Small ribosomal subunit protein uS19 (92 aa).

It belongs to the universal ribosomal protein uS19 family.

Protein S19 forms a complex with S13 that binds strongly to the 16S ribosomal RNA. This chain is Small ribosomal subunit protein uS19, found in Trichormus variabilis (strain ATCC 29413 / PCC 7937) (Anabaena variabilis).